The primary structure comprises 129 residues: Glycine cleavage system H protein (129 aa).

The region spanning 24–106 (SYTVGITEHA…YGDGWFFRIM (83 aa)) is the Lipoyl-binding domain. The residue at position 65 (Lys-65) is an N6-lipoyllysine.

This sequence belongs to the GcvH family. In terms of assembly, the glycine cleavage system is composed of four proteins: P, T, L and H. (R)-lipoate is required as a cofactor.

In terms of biological role, the glycine cleavage system catalyzes the degradation of glycine. The H protein shuttles the methylamine group of glycine from the P protein to the T protein. The protein is Glycine cleavage system H protein of Shewanella denitrificans (strain OS217 / ATCC BAA-1090 / DSM 15013).